We begin with the raw amino-acid sequence, 690 residues long: UvrABC system protein C (690 aa).

A disordered region spans residues 1-60 (MTTDSSDPAKPAGPGQPPGSGADTRPGGLATGQDVDPATIETDEDDEARLPDVPDEPTDA). A compositionally biased stretch (acidic residues) spans 41-58 (ETDEDDEARLPDVPDEPT). The 79-residue stretch at 82–160 (TSPGVYRMMN…IKQLRPRFNV (79 aa)) folds into the GIY-YIG domain. One can recognise a UVR domain in the interval 270 to 305 (RAVKEELAREMEKASGDLAFERAALYRDRLAALSAI).

It belongs to the UvrC family. Interacts with UvrB in an incision complex.

The protein localises to the cytoplasm. Functionally, the UvrABC repair system catalyzes the recognition and processing of DNA lesions. UvrC both incises the 5' and 3' sides of the lesion. The N-terminal half is responsible for the 3' incision and the C-terminal half is responsible for the 5' incision. The sequence is that of UvrABC system protein C from Nitrobacter hamburgensis (strain DSM 10229 / NCIMB 13809 / X14).